The sequence spans 322 residues: Phosphatidylserine decarboxylase proenzyme (322 aa).

Catalysis depends on charge relay system; for autoendoproteolytic cleavage activity residues Asp90, His147, and Ser254. Ser254 serves as the catalytic Schiff-base intermediate with substrate; via pyruvic acid; for decarboxylase activity. Ser254 is modified (pyruvic acid (Ser); by autocatalysis). Residues 293 to 322 (PDAEPAPLPAEEIEAEHDASPLVDDKKDQV) form a disordered region. Over residues 308-322 (EHDASPLVDDKKDQV) the composition is skewed to basic and acidic residues.

It belongs to the phosphatidylserine decarboxylase family. PSD-B subfamily. Prokaryotic type I sub-subfamily. As to quaternary structure, heterodimer of a large membrane-associated beta subunit and a small pyruvoyl-containing alpha subunit. Pyruvate serves as cofactor. Post-translationally, is synthesized initially as an inactive proenzyme. Formation of the active enzyme involves a self-maturation process in which the active site pyruvoyl group is generated from an internal serine residue via an autocatalytic post-translational modification. Two non-identical subunits are generated from the proenzyme in this reaction, and the pyruvate is formed at the N-terminus of the alpha chain, which is derived from the carboxyl end of the proenzyme. The autoendoproteolytic cleavage occurs by a canonical serine protease mechanism, in which the side chain hydroxyl group of the serine supplies its oxygen atom to form the C-terminus of the beta chain, while the remainder of the serine residue undergoes an oxidative deamination to produce ammonia and the pyruvoyl prosthetic group on the alpha chain. During this reaction, the Ser that is part of the protease active site of the proenzyme becomes the pyruvoyl prosthetic group, which constitutes an essential element of the active site of the mature decarboxylase.

It localises to the cell membrane. It catalyses the reaction a 1,2-diacyl-sn-glycero-3-phospho-L-serine + H(+) = a 1,2-diacyl-sn-glycero-3-phosphoethanolamine + CO2. The protein operates within phospholipid metabolism; phosphatidylethanolamine biosynthesis; phosphatidylethanolamine from CDP-diacylglycerol: step 2/2. Functionally, catalyzes the formation of phosphatidylethanolamine (PtdEtn) from phosphatidylserine (PtdSer). The polypeptide is Phosphatidylserine decarboxylase proenzyme (Escherichia coli O139:H28 (strain E24377A / ETEC)).